A 240-amino-acid polypeptide reads, in one-letter code: Ubiquinone biosynthesis O-methyltransferase (240 aa).

Positions 44, 64, 85, and 129 each coordinate S-adenosyl-L-methionine.

Belongs to the methyltransferase superfamily. UbiG/COQ3 family.

The enzyme catalyses a 3-demethylubiquinol + S-adenosyl-L-methionine = a ubiquinol + S-adenosyl-L-homocysteine + H(+). The catalysed reaction is a 3-(all-trans-polyprenyl)benzene-1,2-diol + S-adenosyl-L-methionine = a 2-methoxy-6-(all-trans-polyprenyl)phenol + S-adenosyl-L-homocysteine + H(+). The protein operates within cofactor biosynthesis; ubiquinone biosynthesis. O-methyltransferase that catalyzes the 2 O-methylation steps in the ubiquinone biosynthetic pathway. In Escherichia coli O127:H6 (strain E2348/69 / EPEC), this protein is Ubiquinone biosynthesis O-methyltransferase.